The chain runs to 370 residues: Aminomethyltransferase (370 aa).

The protein belongs to the GcvT family. In terms of assembly, the glycine cleavage system is composed of four proteins: P, T, L and H.

The enzyme catalyses N(6)-[(R)-S(8)-aminomethyldihydrolipoyl]-L-lysyl-[protein] + (6S)-5,6,7,8-tetrahydrofolate = N(6)-[(R)-dihydrolipoyl]-L-lysyl-[protein] + (6R)-5,10-methylene-5,6,7,8-tetrahydrofolate + NH4(+). In terms of biological role, the glycine cleavage system catalyzes the degradation of glycine. In Prochlorococcus marinus (strain AS9601), this protein is Aminomethyltransferase.